We begin with the raw amino-acid sequence, 573 residues long: Adenine deaminase (573 aa).

It belongs to the metallo-dependent hydrolases superfamily. Adenine deaminase family. The cofactor is Mn(2+).

The enzyme catalyses adenine + H2O + H(+) = hypoxanthine + NH4(+). The chain is Adenine deaminase from Bacillus licheniformis (strain ATCC 14580 / DSM 13 / JCM 2505 / CCUG 7422 / NBRC 12200 / NCIMB 9375 / NCTC 10341 / NRRL NRS-1264 / Gibson 46).